Here is a 729-residue protein sequence, read N- to C-terminus: MNPTNLNFGKILKQVEMVDVNEDSLDLKFPKRTIVDISTDTFIKIIFEKDDNYYLFLNYVNALDLYLNYYTNINLVSSNKQLLNQDEHIDVYFKGGNVMNYHFRTMVSDPRLKELFSAYFKKSDFDFSVSIHTDTDNRFNQLKTYVYPKIIDYLITTSNLFNEYLQEIINGDINKSTIKIDPKFLHNFKQDNADLKYYTIRDTIKDIIGLPRFNFVKEIIDNTRNTNTKNFMHIRQIDNIGRYIRVKFHDNSIIQFIPSDKSFYELKYTPYIINNFNQVIDYYNEYVLNGLIPVYHNFYENSKYHACLLYPYYKYLVEPIGQHEMEYSDLIDKIIKYNFSLLEKSEFYTKEKINSMLQQISTSLNELKDTYYEKNSDNPPDKTEVTNSNAFIRYTVNKNRSDNPHIELAPTNNFLVYNDFEKSDPLSIINFDDNQTIKTTNNVHYVSGNMLIKNILGNRQILDFDLFRIKFNLVAVNYIFENEKLLREFKIPSEFIDVSVTIIDSNVYNEDHQTFIMPIKLDNTIIPDIPVKSHSYTYFIGDLIRILFTDFNFFPWMKGKYEKRIKRLLLLLYLYDQQHQTNYLDTLYNMATNIKYNLTNPNKTQKNMDKYALSKVHLNSYKDYSNLFDLVYIDNKYGPIKEPMKMLLIVSEILDKNNALDIINHFRKYLKLAPLTNISNLKTEFGKFLDEIISTYNDINPQNIQAKSSINTLVSRNNYSMIKNNRRNY.

Belongs to the mimivirus L515/L516 family.

The protein resides in the virion. This is an uncharacterized protein from Acanthamoeba polyphaga mimivirus (APMV).